A 379-amino-acid polypeptide reads, in one-letter code: Lipid-A-disaccharide synthase (379 aa).

It belongs to the LpxB family.

The catalysed reaction is a lipid X + a UDP-2-N,3-O-bis[(3R)-3-hydroxyacyl]-alpha-D-glucosamine = a lipid A disaccharide + UDP + H(+). It participates in bacterial outer membrane biogenesis; LPS lipid A biosynthesis. Its function is as follows. Condensation of UDP-2,3-diacylglucosamine and 2,3-diacylglucosamine-1-phosphate to form lipid A disaccharide, a precursor of lipid A, a phosphorylated glycolipid that anchors the lipopolysaccharide to the outer membrane of the cell. This chain is Lipid-A-disaccharide synthase, found in Vibrio parahaemolyticus serotype O3:K6 (strain RIMD 2210633).